The following is a 329-amino-acid chain: DNA-directed RNA polymerase subunit alpha (329 aa).

Residues 1-235 are alpha N-terminal domain (alpha-NTD); the sequence is MQGSVTEFLK…EQLEAFVDLR (235 aa). The interval 249-329 is alpha C-terminal domain (alpha-CTD); it reads FDPILLRPVD…NWPPASIADE (81 aa).

This sequence belongs to the RNA polymerase alpha chain family. As to quaternary structure, homodimer. The RNAP catalytic core consists of 2 alpha, 1 beta, 1 beta' and 1 omega subunit. When a sigma factor is associated with the core the holoenzyme is formed, which can initiate transcription.

It carries out the reaction RNA(n) + a ribonucleoside 5'-triphosphate = RNA(n+1) + diphosphate. DNA-dependent RNA polymerase catalyzes the transcription of DNA into RNA using the four ribonucleoside triphosphates as substrates. This Yersinia pestis bv. Antiqua (strain Antiqua) protein is DNA-directed RNA polymerase subunit alpha.